The following is a 375-amino-acid chain: DNA replication and repair protein RecF (375 aa).

An ATP-binding site is contributed by 30–37 (GNNGSGKS).

The protein belongs to the RecF family.

It localises to the cytoplasm. Its function is as follows. The RecF protein is involved in DNA metabolism; it is required for DNA replication and normal SOS inducibility. RecF binds preferentially to single-stranded, linear DNA. It also seems to bind ATP. This chain is DNA replication and repair protein RecF, found in Hahella chejuensis (strain KCTC 2396).